A 121-amino-acid chain; its full sequence is Large ribosomal subunit protein bL19 (121 aa).

This sequence belongs to the bacterial ribosomal protein bL19 family.

Functionally, this protein is located at the 30S-50S ribosomal subunit interface and may play a role in the structure and function of the aminoacyl-tRNA binding site. The chain is Large ribosomal subunit protein bL19 from Polaromonas sp. (strain JS666 / ATCC BAA-500).